A 242-amino-acid polypeptide reads, in one-letter code: ATP synthase subunit a (242 aa).

The next 6 helical transmembrane spans lie at 29 to 49 (SSIYMLLASILALTYFYLAFY), 84 to 104 (FIPLVFSLFIFILFCNLLGMT), 114 to 134 (IIVTFTLAILVFLIVTIVGFV), 140 to 160 (FLTLFLPHGTPLWLAPLIIVI), 181 to 201 (MAGHVLLKVIAGFTVSLMIYL), and 203 to 223 (FLPIPIMVILIGFEIFVAILQ).

Belongs to the ATPase A chain family. As to quaternary structure, F-type ATPases have 2 components, CF(1) - the catalytic core - and CF(0) - the membrane proton channel. CF(1) has five subunits: alpha(3), beta(3), gamma(1), delta(1), epsilon(1). CF(0) has three main subunits: a(1), b(2) and c(9-12). The alpha and beta chains form an alternating ring which encloses part of the gamma chain. CF(1) is attached to CF(0) by a central stalk formed by the gamma and epsilon chains, while a peripheral stalk is formed by the delta and b chains.

Its subcellular location is the cell inner membrane. Functionally, key component of the proton channel; it plays a direct role in the translocation of protons across the membrane. The protein is ATP synthase subunit a of Rickettsia peacockii (strain Rustic).